The sequence spans 497 residues: MQIVVGCMPALTLKTDCLMLGVWQDRTDTPLLKELDTALHGALGQSVDSKAFVGKEGETLLFQTGAGLPAARVLLIGLGAYAQADCGAMRRGAAEGARVLQQQRVKRAGLALSEAPAGLPLTQAVQVLVEGLLLASYRFDRFLTQKREDLPPLLETLDILIADQGSLEGVAAAVERARHIGHGVALARDLVNQPGNVKSPEFLAERARQLAGECGLSCTVLEQEQLEREGFGALLAVAQGSARPPRLIVLEYRGGAPDEKPLALVGKGVVFDSGGISLKPGEKMDEMKMDMAGAAAVFGAMSAAAGLRLPVNLVAIVPAVENLPSASAYRPGDIITSLSGRTIEVLNTDAEGRLILADALTYAGRFEPRAVIDLATLTGACIIALGHEASAVFSNRDELARNLIRAGETSRERLWQLPLWDSYDKQIKSEIADMKNTGGRPAGTITAAAFLQRFVPDCPWAHIDIAGTAWEAKGTALCPRGGTGVGVRLLIDLLEQE.

Residues Lys-267 and Asp-272 each coordinate Mn(2+). The active site involves Lys-279. 3 residues coordinate Mn(2+): Asp-290, Asp-349, and Glu-351. Arg-353 is an active-site residue.

Belongs to the peptidase M17 family. The cofactor is Mn(2+).

The protein resides in the cytoplasm. The enzyme catalyses Release of an N-terminal amino acid, Xaa-|-Yaa-, in which Xaa is preferably Leu, but may be other amino acids including Pro although not Arg or Lys, and Yaa may be Pro. Amino acid amides and methyl esters are also readily hydrolyzed, but rates on arylamides are exceedingly low.. It carries out the reaction Release of an N-terminal amino acid, preferentially leucine, but not glutamic or aspartic acids.. Its function is as follows. Presumably involved in the processing and regular turnover of intracellular proteins. Catalyzes the removal of unsubstituted N-terminal amino acids from various peptides. The polypeptide is Probable cytosol aminopeptidase (Syntrophotalea carbinolica (strain DSM 2380 / NBRC 103641 / GraBd1) (Pelobacter carbinolicus)).